Consider the following 457-residue polypeptide: Bifunctional protein GlmU (457 aa).

Positions 1–232 (MAKVAAIVLA…PMEVMGVNDR (232 aa)) are pyrophosphorylase. UDP-N-acetyl-alpha-D-glucosamine contacts are provided by residues 9 to 12 (LAAG), Lys23, Gln75, and 80 to 81 (GT). Mg(2+) is bound at residue Asp105. UDP-N-acetyl-alpha-D-glucosamine contacts are provided by Gly142, Glu157, Asn172, and Asn230. Position 230 (Asn230) interacts with Mg(2+). The linker stretch occupies residues 233–253 (VQLAEAGRIIRVRINKALMVA). Positions 254–457 (GTTIIDPETT…NKEGWKLKNK (204 aa)) are N-acetyltransferase. 2 residues coordinate UDP-N-acetyl-alpha-D-glucosamine: Arg336 and Lys354. The active-site Proton acceptor is the His366. UDP-N-acetyl-alpha-D-glucosamine contacts are provided by Tyr369 and Asn380. Acetyl-CoA-binding positions include 389–390 (NY), Ser408, Ala426, and Arg443.

This sequence in the N-terminal section; belongs to the N-acetylglucosamine-1-phosphate uridyltransferase family. The protein in the C-terminal section; belongs to the transferase hexapeptide repeat family. In terms of assembly, homotrimer. Mg(2+) serves as cofactor.

It localises to the cytoplasm. The enzyme catalyses alpha-D-glucosamine 1-phosphate + acetyl-CoA = N-acetyl-alpha-D-glucosamine 1-phosphate + CoA + H(+). The catalysed reaction is N-acetyl-alpha-D-glucosamine 1-phosphate + UTP + H(+) = UDP-N-acetyl-alpha-D-glucosamine + diphosphate. It functions in the pathway nucleotide-sugar biosynthesis; UDP-N-acetyl-alpha-D-glucosamine biosynthesis; N-acetyl-alpha-D-glucosamine 1-phosphate from alpha-D-glucosamine 6-phosphate (route II): step 2/2. It participates in nucleotide-sugar biosynthesis; UDP-N-acetyl-alpha-D-glucosamine biosynthesis; UDP-N-acetyl-alpha-D-glucosamine from N-acetyl-alpha-D-glucosamine 1-phosphate: step 1/1. The protein operates within bacterial outer membrane biogenesis; LPS lipid A biosynthesis. Its function is as follows. Catalyzes the last two sequential reactions in the de novo biosynthetic pathway for UDP-N-acetylglucosamine (UDP-GlcNAc). The C-terminal domain catalyzes the transfer of acetyl group from acetyl coenzyme A to glucosamine-1-phosphate (GlcN-1-P) to produce N-acetylglucosamine-1-phosphate (GlcNAc-1-P), which is converted into UDP-GlcNAc by the transfer of uridine 5-monophosphate (from uridine 5-triphosphate), a reaction catalyzed by the N-terminal domain. This Geotalea daltonii (strain DSM 22248 / JCM 15807 / FRC-32) (Geobacter daltonii) protein is Bifunctional protein GlmU.